The primary structure comprises 554 residues: Glutamine--tRNA ligase (554 aa).

A 'HIGH' region motif is present at residues 34 to 44; the sequence is PEPNGYLHIGH. Residues 35 to 37 and 41 to 47 each bind ATP; these read EPN and HIGHAKS. L-glutamine-binding residues include Asp67 and Tyr212. ATP contacts are provided by residues Thr231, 261 to 262, and 269 to 271; these read RL and MSK. A 'KMSKS' region motif is present at residues 268 to 272; the sequence is VMSKR. Residues 317–324 form an interaction with tRNA region; it reads TKQDNTIE.

It belongs to the class-I aminoacyl-tRNA synthetase family. In terms of assembly, monomer.

The protein localises to the cytoplasm. The catalysed reaction is tRNA(Gln) + L-glutamine + ATP = L-glutaminyl-tRNA(Gln) + AMP + diphosphate. The polypeptide is Glutamine--tRNA ligase (Escherichia coli O17:K52:H18 (strain UMN026 / ExPEC)).